The primary structure comprises 300 residues: Putative heme-binding peroxidase (300 aa).

The Proton acceptor role is filled by His-39. Disordered regions lie at residues 44 to 64 (YDKSTDTGGSNGAGMRYEAEG) and 116 to 135 (GRTDFADDSRVPPRGRLPDA). Positions 116 to 126 (GRTDFADDSRV) are enriched in basic and acidic residues. His-163 contacts heme b. Trp-179 (tryptophan radical intermediate) is an active-site residue.

The protein belongs to the peroxidase family. Cytochrome c peroxidase subfamily. Heme b serves as cofactor.

Functionally, destroys radicals which are normally produced within the cells and which are toxic to biological systems. The polypeptide is Putative heme-binding peroxidase (Pyricularia oryzae (strain 70-15 / ATCC MYA-4617 / FGSC 8958) (Rice blast fungus)).